The chain runs to 551 residues: Eukaryotic translation initiation factor 3 subunit D-2 (551 aa).

A disordered region spans residues 108–152 (RARGRTGRGNATLGGLGGPVAGGSTANSTKYGKGRNTRNAQNMGR). The segment covering 119–128 (TLGGLGGPVA) has biased composition (gly residues). The segment at 290-304 (QFDLLTVNETSLEPP) is RNA gate. The tract at residues 530-551 (AFDSDGDDESESSEPFGNSIDN) is disordered. A compositionally biased stretch (acidic residues) spans 531-541 (FDSDGDDESES).

Belongs to the eIF-3 subunit D family. In terms of assembly, component of the eukaryotic translation initiation factor 3 (eIF-3) complex. The eIF-3 complex interacts with pix.

Its subcellular location is the cytoplasm. Its function is as follows. mRNA cap-binding component of the eukaryotic translation initiation factor 3 (eIF-3) complex, which is involved in protein synthesis of a specialized repertoire of mRNAs and, together with other initiation factors, stimulates binding of mRNA and methionyl-tRNAi to the 40S ribosome. The eIF-3 complex specifically targets and initiates translation of a subset of mRNAs involved in cell proliferation. In the eIF-3 complex, eif3d specifically recognizes and binds the 7-methylguanosine cap of a subset of mRNAs. This Drosophila yakuba (Fruit fly) protein is Eukaryotic translation initiation factor 3 subunit D-2.